The primary structure comprises 278 residues: 4-diphosphocytidyl-2-C-methyl-D-erythritol kinase (278 aa).

Lysine 9 is an active-site residue. 89 to 99 contacts ATP; that stretch reads PVASGIGGGSA. Aspartate 128 is a catalytic residue.

It belongs to the GHMP kinase family. IspE subfamily.

It carries out the reaction 4-CDP-2-C-methyl-D-erythritol + ATP = 4-CDP-2-C-methyl-D-erythritol 2-phosphate + ADP + H(+). It functions in the pathway isoprenoid biosynthesis; isopentenyl diphosphate biosynthesis via DXP pathway; isopentenyl diphosphate from 1-deoxy-D-xylulose 5-phosphate: step 3/6. In terms of biological role, catalyzes the phosphorylation of the position 2 hydroxy group of 4-diphosphocytidyl-2C-methyl-D-erythritol. The protein is 4-diphosphocytidyl-2-C-methyl-D-erythritol kinase of Cereibacter sphaeroides (strain ATCC 17029 / ATH 2.4.9) (Rhodobacter sphaeroides).